The following is a 261-amino-acid chain: Uridine-cytidine kinase 2 (261 aa).

Residues 1–24 are disordered; that stretch reads MAGDSEQALPKHSPQNGQPFLIGV. 26–34 serves as a coordination point for ATP; it reads GGTASGKSS. Residues aspartate 83, tyrosine 111, histidine 116, arginine 165, arginine 175, and glutamine 183 each coordinate substrate. Aspartate 212 is an ATP binding site. Polar residues predominate over residues 238-247; the sequence is NGYTNGFTSP. The tract at residues 238 to 261 is disordered; the sequence is NGYTNGFTSPRTRHPSDSNSSRPH.

Belongs to the uridine kinase family. Homotetramer.

The catalysed reaction is uridine + ATP = UMP + ADP + H(+). It carries out the reaction cytidine + ATP = CMP + ADP + H(+). The protein operates within pyrimidine metabolism; CTP biosynthesis via salvage pathway; CTP from cytidine: step 1/3. Its pathway is pyrimidine metabolism; UMP biosynthesis via salvage pathway; UMP from uridine: step 1/1. In terms of biological role, phosphorylates uridine and cytidine to uridine monophosphate and cytidine monophosphate. Does not phosphorylate deoxyribonucleosides or purine ribonucleosides. Can use ATP or GTP as a phosphate donor. This chain is Uridine-cytidine kinase 2 (uck2), found in Xenopus tropicalis (Western clawed frog).